The chain runs to 61 residues: Small ribosomal subunit protein uS14 (61 aa).

The Zn(2+) site is built by cysteine 24, cysteine 27, cysteine 40, and cysteine 43.

It belongs to the universal ribosomal protein uS14 family. Zinc-binding uS14 subfamily. In terms of assembly, part of the 30S ribosomal subunit. Contacts proteins S3 and S10. The cofactor is Zn(2+).

Its function is as follows. Binds 16S rRNA, required for the assembly of 30S particles and may also be responsible for determining the conformation of the 16S rRNA at the A site. In Lachnospira eligens (strain ATCC 27750 / DSM 3376 / VPI C15-48 / C15-B4) (Eubacterium eligens), this protein is Small ribosomal subunit protein uS14.